Consider the following 407-residue polypeptide: Probable tRNA sulfurtransferase (407 aa).

The THUMP domain occupies 61 to 165 (NEITYRLSKI…LDAIYMYEEV (105 aa)). ATP-binding positions include 183 to 184 (ML), 208 to 209 (HF), R265, G287, and Q296.

The protein belongs to the ThiI family.

It is found in the cytoplasm. The enzyme catalyses [ThiI sulfur-carrier protein]-S-sulfanyl-L-cysteine + a uridine in tRNA + 2 reduced [2Fe-2S]-[ferredoxin] + ATP + H(+) = [ThiI sulfur-carrier protein]-L-cysteine + a 4-thiouridine in tRNA + 2 oxidized [2Fe-2S]-[ferredoxin] + AMP + diphosphate. The catalysed reaction is [ThiS sulfur-carrier protein]-C-terminal Gly-Gly-AMP + S-sulfanyl-L-cysteinyl-[cysteine desulfurase] + AH2 = [ThiS sulfur-carrier protein]-C-terminal-Gly-aminoethanethioate + L-cysteinyl-[cysteine desulfurase] + A + AMP + 2 H(+). The protein operates within cofactor biosynthesis; thiamine diphosphate biosynthesis. Functionally, catalyzes the ATP-dependent transfer of a sulfur to tRNA to produce 4-thiouridine in position 8 of tRNAs, which functions as a near-UV photosensor. Also catalyzes the transfer of sulfur to the sulfur carrier protein ThiS, forming ThiS-thiocarboxylate. This is a step in the synthesis of thiazole, in the thiamine biosynthesis pathway. The sulfur is donated as persulfide by IscS. This Staphylococcus aureus (strain Mu3 / ATCC 700698) protein is Probable tRNA sulfurtransferase.